A 229-amino-acid polypeptide reads, in one-letter code: uncharacterized protein (229 aa).

A disordered region spans residues 1–102 (MKLLGRKKSY…AASKAQITDR (102 aa)). Residues 73–94 (ARRKSLAPPKCHRAERRAKRAA) show a composition bias toward basic residues. Helical transmembrane passes span 137–157 (LGLF…VPQL) and 159–179 (LYMS…GIIL).

It localises to the cell membrane. This is an uncharacterized protein from Mycobacterium leprae (strain TN).